A 154-amino-acid chain; its full sequence is 17 kDa surface antigen (154 aa).

An N-terminal signal peptide occupies residues Met1–Ala19. Residue Cys20 is the site of N-palmitoyl cysteine attachment. A lipid anchor (S-diacylglycerol cysteine) is attached at Cys20.

Belongs to the rickettsiale 17 kDa surface antigen family.

The protein localises to the cell outer membrane. The protein is 17 kDa surface antigen (omp) of Rickettsia parkeri.